A 381-amino-acid polypeptide reads, in one-letter code: Transcriptional regulatory protein FlgR (381 aa).

The 112-residue stretch at 2–113 folds into the Response regulatory domain; it reads KIAIVEDDIN…LLLESIYRTK (112 aa). Aspartate 51 carries the 4-aspartylphosphate modification. Positions 136–365 constitute a Sigma-54 factor interaction domain; that stretch reads FLAASKALEE…LLGVVERAAI (230 aa). Residues 164–171 and 227–236 each bind ATP; these read GESGVGKE and ANKGTIFLDE.

In terms of processing, phosphorylated by FlgS.

In terms of biological role, member of the two-component regulatory system FlgR/FlgS that induces the transcriptional induction of the genes needed in motility and flagellar biogenesis. Upon phosphorylation by FlgS, functions as a transcriptional regulator and activates transcription of RpoN-dependent flagellar genes. This chain is Transcriptional regulatory protein FlgR (flgR), found in Helicobacter pylori (strain ATCC 700392 / 26695) (Campylobacter pylori).